Here is a 697-residue protein sequence, read N- to C-terminus: MPRQLFVTTALPYANGHFHIGHIMEYIQADIWVRFQRMQGHAVHFVGADDAHGAPIMIAAEKAGKTPQQFVADIAAGRKPYLDGFHIAFDNWHSTDGPENHQLAQDTYRALRRNGLIFTREIEQFFDPVKAMFLPDRYIKGECPKCGAKDQYGDSCEVCGAVYAPTELKNPYSTLTGATPVMKTSEHHFFQLSSPRCLDFLKDWTHGSAPISGQPRLQAEVLNKIKEWFATDEQGHGGLADWDISRDAPYFGIEIPDAPGKYFYVWLDAPIGYLASLKNYFDKQGLDFEAFMADPKTEQVHFIGKDITYFHTLFWPAMLHFSGRRTPDHVFVHGFITVSGEKMSKSRGTGISPLRYLEIGMNAEWLRYYIAAKLNGRVEDVDFNPDDFVARVNSDLVGKYINIASRAAGFLSKRFDGRLTAELPAESRTLLEGLQAARDDIARLYEDREYAKALREAMALADRVNEYVDANKPWELAKQAGQDARLQQVCSTCIEAFRLLTIYLKPVLPALAAQVEGFLKVEPMRFADAGRLLGAHAISEYKHLMQRVDPKLLDALFEPPAEPSPQTSPAAAGAGAVPGGEALAPTITIDDFTKIDLRLAQIVDAALVEGSTKLLRLSLDVGEGRHRTVFSGIQSAFKPADVIGKFTVVVANLAPRKMKFGLSEGMVLAASHADEKTHPGLYLLEPTPGAVPGLRVR.

A 'HIGH' region motif is present at residues proline 12–histidine 22. The Zn(2+) site is built by cysteine 143, cysteine 146, cysteine 156, and cysteine 159. The 'KMSKS' region signature appears at lysine 342–serine 346. Lysine 345 contributes to the ATP binding site. The disordered stretch occupies residues phenylalanine 557–valine 577. A tRNA-binding domain is found at aspartate 591 to arginine 697.

It belongs to the class-I aminoacyl-tRNA synthetase family. MetG type 1 subfamily. In terms of assembly, homodimer. Zn(2+) is required as a cofactor.

The protein localises to the cytoplasm. The catalysed reaction is tRNA(Met) + L-methionine + ATP = L-methionyl-tRNA(Met) + AMP + diphosphate. Is required not only for elongation of protein synthesis but also for the initiation of all mRNA translation through initiator tRNA(fMet) aminoacylation. The chain is Methionine--tRNA ligase from Methylibium petroleiphilum (strain ATCC BAA-1232 / LMG 22953 / PM1).